A 682-amino-acid chain; its full sequence is Protein PilJ (682 aa).

Residues 1 to 14 (MKKINAGNLFAGMR) lie on the Cytoplasmic side of the membrane. Residues 15–38 (SSSVIAGLFIVLIVSIVLLFANFA) form a helical membrane-spanning segment. Residues 39 to 306 (YLNTQSNHDK…DGFENLAGGR (268 aa)) lie on the Periplasmic side of the membrane. The helical transmembrane segment at 307–333 (SINLFAGYALGALALASIILIGLVMVR) threads the bilayer. Over 334 to 682 (ETNRRLAETA…FKLPEGVEQA (349 aa)) the chain is Cytoplasmic. Positions 347–398 (DRNQAAILRLLDEIADLADGDLTVAATVTEDFTGAIADSINYSIDQLRELVE) constitute an HAMP domain. The 237-residue stretch at 403–639 (TAVQVAAAAQ…HISNTMNVIQ (237 aa)) folds into the Methyl-accepting transducer domain.

Belongs to the methyl-accepting chemotaxis (MCP) protein family.

The protein localises to the cell inner membrane. Functionally, may be a part of a signal-transduction system that regulates twitching motility by controlling pilus function (extension and retraction). This Pseudomonas aeruginosa (strain ATCC 15692 / DSM 22644 / CIP 104116 / JCM 14847 / LMG 12228 / 1C / PRS 101 / PAO1) protein is Protein PilJ (pilJ).